A 79-amino-acid chain; its full sequence is Protein OPG081 (79 aa).

The Intravirion portion of the chain corresponds to 1–8 (MVDAITVL). A helical transmembrane segment spans residues 9 to 29 (TAIGITVLMLLMVISGAAMIV). Residues 30–47 (KELNPNDIFTMQSLKFNR) lie on the Virion surface side of the membrane. Residues 48–68 (AVTIFKYIGLFIYIPGTIILY) form a helical membrane-spanning segment. Over 69–79 (ATYVKSLLMKS) the chain is Intravirion.

Belongs to the orthopoxvirus OPG081 family.

Its subcellular location is the virion membrane. Envelope protein. In Vaccinia virus (strain Copenhagen) (VACV), this protein is Protein OPG081 (OPG081).